We begin with the raw amino-acid sequence, 305 residues long: MKQLPKTRTALLLAFLVIMWGVNWPLSKAALAYSPPLLFAGIRTLIGGLLLVIVALPRIHKLRLKETWPIYLVSALLNITLFYGLQTIGLNYLPAGLFSAIVFFQPVLMGVFSWLWLGESMFVMKVIGLILGFAGVAVISAAGFGGHISVIGVLLALGSAVSWALGTVYMKKTGSRVDSIWMVALQLTIGSVFLLISGFWTESFSAIQWTAPFITSLLFISVFVIALGWLVFFTLVGSGEASKVASYTFLIPLISIVASSIFLHEPLTLSLLAGLLLIVTSICLVNTKSKAQKAAAIGINEKAAQ.

Helical transmembrane passes span 11–31 (LLLAFLVIMWGVNWPLSKAAL), 37–57 (LLFAGIRTLIGGLLLVIVALP), 70–90 (IYLVSALLNITLFYGLQTIGL), 97–117 (LFSAIVFFQPVLMGVFSWLWL), 126–146 (VIGLILGFAGVAVISAAGFGG), 148–168 (ISVIGVLLALGSAVSWALGTV), 180–200 (IWMVALQLTIGSVFLLISGFW), 217–237 (LLFISVFVIALGWLVFFTLVG), 244–264 (VASYTFLIPLISIVASSIFLH), and 265–285 (EPLTLSLLAGLLLIVTSICLV). 2 EamA domains span residues 18-141 (IMWG…VISA) and 161-287 (VSWA…LVNT).

It belongs to the EamA transporter family.

It is found in the cell membrane. This is an uncharacterized protein from Bacillus subtilis (strain 168).